The sequence spans 426 residues: Enolase (426 aa).

Q163 contacts (2R)-2-phosphoglycerate. E205 functions as the Proton donor in the catalytic mechanism. 3 residues coordinate Mg(2+): D242, E283, and D310. Positions 335, 364, 365, and 386 each coordinate (2R)-2-phosphoglycerate. K335 (proton acceptor) is an active-site residue.

This sequence belongs to the enolase family. It depends on Mg(2+) as a cofactor.

The protein localises to the cytoplasm. Its subcellular location is the secreted. It is found in the cell surface. It carries out the reaction (2R)-2-phosphoglycerate = phosphoenolpyruvate + H2O. Its pathway is carbohydrate degradation; glycolysis; pyruvate from D-glyceraldehyde 3-phosphate: step 4/5. Functionally, catalyzes the reversible conversion of 2-phosphoglycerate (2-PG) into phosphoenolpyruvate (PEP). It is essential for the degradation of carbohydrates via glycolysis. The polypeptide is Enolase (Pseudarthrobacter chlorophenolicus (strain ATCC 700700 / DSM 12829 / CIP 107037 / JCM 12360 / KCTC 9906 / NCIMB 13794 / A6) (Arthrobacter chlorophenolicus)).